Consider the following 113-residue polypeptide: Nucleoid-associated protein Syncc9605_0027 (113 aa).

It belongs to the YbaB/EbfC family. As to quaternary structure, homodimer.

The protein localises to the cytoplasm. The protein resides in the nucleoid. In terms of biological role, binds to DNA and alters its conformation. May be involved in regulation of gene expression, nucleoid organization and DNA protection. The sequence is that of Nucleoid-associated protein Syncc9605_0027 from Synechococcus sp. (strain CC9605).